Here is a 383-residue protein sequence, read N- to C-terminus: Putative transcription factor 282R (383 aa).

The protein belongs to the IIV-6 282R family.

Transcription activation. The protein is Putative transcription factor 282R of Acheta domesticus (House cricket).